Here is a 184-residue protein sequence, read N- to C-terminus: MESFSSKSLALQAEKKLLSKMVGRSAAHLFIDETSSEVLDELYRVSKEYTHSRPQAQRVIKDLIKVAVKVAVLHRSGCFGPSELALATRFRQKLRQGAMTALSFGEVDFTFEAAVLAGLLTECRDVLLELVENHLTPKSHGRIRHVFDHFSDPGLLTALYGPDFTQHLGKICDGLRKLLEEGKL.

Ser-3 carries the post-translational modification Phosphoserine.

The protein belongs to the TNFAIP8 family. TNFAIP8L2 subfamily. In terms of assembly, may interact with CASP8; however, such result is unclear since could not reproduce the interaction with CASP8. Interacts with RAC1. In terms of processing, phosphorylated by TAK1/MAP3K7; this phosphorylation triggers association with BTRC and subsequent ubiquitination and degradation. Ubiquitinated in a BTRC-depdent manner; leading to degradation mediated through the proteasome pathway.

It localises to the cytoplasm. Its subcellular location is the nucleus. It is found in the lysosome. In terms of biological role, acts as a negative regulator of innate and adaptive immunity by maintaining immune homeostasis. Plays a regulatory role in the Toll-like signaling pathway by determining the strength of LPS-induced signaling and gene expression. Inhibits TCR-mediated T-cell activation and negatively regulate T-cell function to prevent hyperresponsiveness. Also inhibits autolysosome formation via negatively modulating MTOR activation by interacting with RAC1 and promoting the disassociation of the RAC1-MTOR complex. Plays an essential role in NK-cell biology by acting as a checkpoint and displaying an expression pattern correlating with NK-cell maturation process and by negatively regulating NK-cell maturation and antitumor immunity. Mechanistically, suppresses IL-15-triggered mTOR activity in NK-cells. The sequence is that of Tumor necrosis factor alpha-induced protein 8-like protein 2 (TNFAIP8L2) from Oryctolagus cuniculus (Rabbit).